A 311-amino-acid polypeptide reads, in one-letter code: MNAVMSLKGRDFLTLLDFSTEEILDLLALAADLKAKQKAGVSYTPLSGKTMAMIFEKPSGTRVSFEVGMIQLGGQAMYLNGNHLQLGRGETIADTARVLSQYVRVIMIRTFAHQKVEELAEYASFRSSNGLTDDDHPCQALADLLTIYEVKKTFQGVKLAYVGDGNNVANALLVAAAKVGMDVAIACPPGYEPKKEYVEAACRVGEQTGRRVTVTHDPLVAVAGADRIYTDVWTSMGQESESSERLQVFQPYQVNEELVKAAKPDYLFLHCLPAHRGEEVTAGVMDGPNSVVFEQAGNRLHAQKAILLSVL.

Residues Gln-85, Arg-109, and 136 to 139 (HPCQ) contribute to the carbamoyl phosphate site. L-ornithine-binding positions include Asn-167, Asp-231, and 235-236 (SM). Carbamoyl phosphate-binding positions include 271–272 (CL) and Arg-299.

The protein belongs to the aspartate/ornithine carbamoyltransferase superfamily. OTCase family.

The protein localises to the cytoplasm. It catalyses the reaction carbamoyl phosphate + L-ornithine = L-citrulline + phosphate + H(+). It participates in amino-acid biosynthesis; L-arginine biosynthesis; L-arginine from L-ornithine and carbamoyl phosphate: step 1/3. Its function is as follows. Reversibly catalyzes the transfer of the carbamoyl group from carbamoyl phosphate (CP) to the N(epsilon) atom of ornithine (ORN) to produce L-citrulline. This chain is Ornithine carbamoyltransferase (argF), found in Geobacillus stearothermophilus (Bacillus stearothermophilus).